The chain runs to 95 residues: Large ribosomal subunit protein bL25 (95 aa).

It belongs to the bacterial ribosomal protein bL25 family. Part of the 50S ribosomal subunit; part of the 5S rRNA/L5/L18/L25 subcomplex. Contacts the 5S rRNA. Binds to the 5S rRNA independently of L5 and L18.

In terms of biological role, this is one of the proteins that binds to the 5S RNA in the ribosome where it forms part of the central protuberance. This chain is Large ribosomal subunit protein bL25, found in Shewanella sediminis (strain HAW-EB3).